A 302-amino-acid polypeptide reads, in one-letter code: Heme A synthase (302 aa).

Residues 1–8 (MFRKQNLK) are Cytoplasmic-facing. Residues 9–29 (WLGVLATIIMTFVQLGGALVT) form a helical membrane-spanning segment. Over 30–67 (KTGSEDGCGSSWPLCNGALLPENLPIQTIIELSHRAVS) the chain is Extracellular. A disulfide bond links C37 and C44. E60 is a catalytic residue. A heme o-binding site is contributed by H63. A helical transmembrane segment spans residues 68–88 (AISLIVVLWLVITAWKNIGYI). Over 89–93 (KEIKP) the chain is Cytoplasmic. A helical transmembrane segment spans residues 94–114 (LSIISVGFLLVQALVGAAAVI). Residues 115 to 125 (WQQNPYVLALH) lie on the Extracellular side of the membrane. H125 provides a ligand contact to heme o. The chain crosses the membrane as a helical span at residues 126–146 (FGISLISFSSVFLMTLIIFSI). The Cytoplasmic segment spans residues 147 to 161 (DKKYEADILFIHKPL). Residues 162–182 (RILTWLMAIIVYLTIYTGALV) form a helical membrane-spanning segment. At 183 to 215 (RHTKSSLAYGAWPIPFDDIVPHNAHDWVQFSHR) the chain is on the extracellular side. H214 is a heme b binding site. The helical transmembrane segment at 216–236 (GMAFITFIWIMITFIHAIKNY) threads the bilayer. The Cytoplasmic portion of the chain corresponds to 237–244 (SDNRTVRY). The helical transmembrane segment at 245–265 (GYTASFILVILQVITGALSVI) threads the bilayer. Residues 266–270 (TNVNL) lie on the Extracellular side of the membrane. A helical membrane pass occupies residues 271-291 (IIALFHALFITYLFGMIAYFI). Residue H276 coordinates heme b. The Cytoplasmic portion of the chain corresponds to 292–302 (LLMLRTTRSLK).

The protein belongs to the COX15/CtaA family. Type 1 subfamily. As to quaternary structure, interacts with CtaB. It depends on heme b as a cofactor.

Its subcellular location is the cell membrane. It carries out the reaction Fe(II)-heme o + 2 A + H2O = Fe(II)-heme a + 2 AH2. It functions in the pathway porphyrin-containing compound metabolism; heme A biosynthesis; heme A from heme O: step 1/1. Functionally, catalyzes the conversion of heme O to heme A by two successive hydroxylations of the methyl group at C8. The first hydroxylation forms heme I, the second hydroxylation results in an unstable dihydroxymethyl group, which spontaneously dehydrates, resulting in the formyl group of heme A. The chain is Heme A synthase from Staphylococcus epidermidis (strain ATCC 12228 / FDA PCI 1200).